We begin with the raw amino-acid sequence, 416 residues long: Serine hydroxymethyltransferase (416 aa).

(6S)-5,6,7,8-tetrahydrofolate contacts are provided by residues L117 and 121–123; that span reads GHL. K226 bears the N6-(pyridoxal phosphate)lysine mark.

This sequence belongs to the SHMT family. As to quaternary structure, homodimer. It depends on pyridoxal 5'-phosphate as a cofactor.

It localises to the cytoplasm. It carries out the reaction (6R)-5,10-methylene-5,6,7,8-tetrahydrofolate + glycine + H2O = (6S)-5,6,7,8-tetrahydrofolate + L-serine. It functions in the pathway one-carbon metabolism; tetrahydrofolate interconversion. Its pathway is amino-acid biosynthesis; glycine biosynthesis; glycine from L-serine: step 1/1. Catalyzes the reversible interconversion of serine and glycine with tetrahydrofolate (THF) serving as the one-carbon carrier. This reaction serves as the major source of one-carbon groups required for the biosynthesis of purines, thymidylate, methionine, and other important biomolecules. Also exhibits THF-independent aldolase activity toward beta-hydroxyamino acids, producing glycine and aldehydes, via a retro-aldol mechanism. The polypeptide is Serine hydroxymethyltransferase (Leptospira biflexa serovar Patoc (strain Patoc 1 / Ames)).